Here is a 114-residue protein sequence, read N- to C-terminus: UPF0102 protein Shew_0226 (114 aa).

Belongs to the UPF0102 family.

This is UPF0102 protein Shew_0226 from Shewanella loihica (strain ATCC BAA-1088 / PV-4).